The sequence spans 108 residues: Ribonuclease P protein component (108 aa).

Belongs to the RnpA family. In terms of assembly, consists of a catalytic RNA component (M1 or rnpB) and a protein subunit.

It catalyses the reaction Endonucleolytic cleavage of RNA, removing 5'-extranucleotides from tRNA precursor.. RNaseP catalyzes the removal of the 5'-leader sequence from pre-tRNA to produce the mature 5'-terminus. It can also cleave other RNA substrates such as 4.5S RNA. The protein component plays an auxiliary but essential role in vivo by binding to the 5'-leader sequence and broadening the substrate specificity of the ribozyme. This chain is Ribonuclease P protein component, found in Campylobacter jejuni subsp. doylei (strain ATCC BAA-1458 / RM4099 / 269.97).